The sequence spans 1157 residues: DNA-directed RNA polymerase subunit beta (1157 aa).

The protein belongs to the RNA polymerase beta chain family. In terms of assembly, the RNAP catalytic core consists of 2 alpha, 1 beta, 1 beta' and 1 omega subunit. When a sigma factor is associated with the core the holoenzyme is formed, which can initiate transcription.

It catalyses the reaction RNA(n) + a ribonucleoside 5'-triphosphate = RNA(n+1) + diphosphate. Functionally, DNA-dependent RNA polymerase catalyzes the transcription of DNA into RNA using the four ribonucleoside triphosphates as substrates. The chain is DNA-directed RNA polymerase subunit beta from Tropheryma whipplei (Whipple's bacillus).